The sequence spans 522 residues: Protein DETOXIFICATION 31 (522 aa).

12 helical membrane-spanning segments follow: residues 89 to 109 (GAVT…AVSI), 113 to 133 (VIAG…ETLC), 154 to 174 (VILS…APIL), 183 to 203 (ISAM…AYAI), 217 to 237 (IMVM…FTWL), 249 to 269 (LALV…VYIF), 299 to 319 (AAML…AGYL), 324 to 344 (VSVA…MVAF), 371 to 391 (VVAV…LLFF), 415 to 435 (MLAF…VAVG), 441 to 461 (VVAY…GLLL), and 471 to 491 (GIWW…TWMI).

It belongs to the multi antimicrobial extrusion (MATE) (TC 2.A.66.1) family.

The protein localises to the membrane. Functionally, positively mediates root hair elongation. The sequence is that of Protein DETOXIFICATION 31 from Arabidopsis thaliana (Mouse-ear cress).